A 766-amino-acid chain; its full sequence is Cytoplasmic polyadenylation element-binding protein 3 (766 aa).

Disordered regions lie at residues 1–35 (MSQE…TSET), 131–179 (VPSR…ARRL), and 216–299 (PVPI…LPPR). Polar residues-rich tracts occupy residues 233 to 256 (ETPT…SDYQ) and 276 to 289 (STPN…NRDN). Residues 310–332 (IFVGGVPWDITEAALKDSFGEFG) form the RRM domain. Positions 578–602 (KAFSGPNRRSHLSSNSPSKPASLMS) are disordered. A compositionally biased stretch (low complexity) spans 589-602 (LSSNSPSKPASLMS).

In terms of biological role, cytoplasmic polyadenylation element binding protein that binds to and regulates the translation of specific mRNAs. The polypeptide is Cytoplasmic polyadenylation element-binding protein 3 (cpb-3) (Caenorhabditis remanei (Caenorhabditis vulgaris)).